Consider the following 294-residue polypeptide: UDP-3-O-acyl-N-acetylglucosamine deacetylase (294 aa).

Residues His75, His232, and Asp236 each coordinate Zn(2+). Residue His259 is the Proton donor of the active site.

Belongs to the LpxC family. Zn(2+) serves as cofactor.

It catalyses the reaction a UDP-3-O-[(3R)-3-hydroxyacyl]-N-acetyl-alpha-D-glucosamine + H2O = a UDP-3-O-[(3R)-3-hydroxyacyl]-alpha-D-glucosamine + acetate. The protein operates within glycolipid biosynthesis; lipid IV(A) biosynthesis; lipid IV(A) from (3R)-3-hydroxytetradecanoyl-[acyl-carrier-protein] and UDP-N-acetyl-alpha-D-glucosamine: step 2/6. Its function is as follows. Catalyzes the hydrolysis of UDP-3-O-myristoyl-N-acetylglucosamine to form UDP-3-O-myristoylglucosamine and acetate, the committed step in lipid A biosynthesis. This chain is UDP-3-O-acyl-N-acetylglucosamine deacetylase, found in Campylobacter lari (strain RM2100 / D67 / ATCC BAA-1060).